Consider the following 409-residue polypeptide: LL-diaminopimelate aminotransferase (409 aa).

Residues tyrosine 15 and glycine 42 each contribute to the substrate site. Pyridoxal 5'-phosphate contacts are provided by residues tyrosine 72, 108–109 (AK), tyrosine 132, asparagine 186, tyrosine 217, and 245–247 (SFS). Positions 109, 132, and 186 each coordinate substrate. An N6-(pyridoxal phosphate)lysine modification is found at lysine 248. 2 residues coordinate pyridoxal 5'-phosphate: arginine 256 and asparagine 291. Asparagine 291 and arginine 386 together coordinate substrate.

It belongs to the class-I pyridoxal-phosphate-dependent aminotransferase family. LL-diaminopimelate aminotransferase subfamily. Homodimer. The cofactor is pyridoxal 5'-phosphate.

It catalyses the reaction (2S,6S)-2,6-diaminopimelate + 2-oxoglutarate = (S)-2,3,4,5-tetrahydrodipicolinate + L-glutamate + H2O + H(+). It participates in amino-acid biosynthesis; L-lysine biosynthesis via DAP pathway; LL-2,6-diaminopimelate from (S)-tetrahydrodipicolinate (aminotransferase route): step 1/1. Its function is as follows. Involved in the synthesis of meso-diaminopimelate (m-DAP or DL-DAP), required for both lysine and peptidoglycan biosynthesis. Catalyzes the direct conversion of tetrahydrodipicolinate to LL-diaminopimelate. This is LL-diaminopimelate aminotransferase from Desulforapulum autotrophicum (strain ATCC 43914 / DSM 3382 / VKM B-1955 / HRM2) (Desulfobacterium autotrophicum).